We begin with the raw amino-acid sequence, 221 residues long: Small ribosomal subunit protein uS4c (221 aa).

Residues 26-53 (RKRTDNRCMPGQHRKKRNDSTKKTKNSK) form a disordered region. The segment covering 37–53 (QHRKKRNDSTKKTKNSK) has biased composition (basic residues). The S4 RNA-binding domain maps to 103 to 161 (MRLDNIVFRLGMAPTIPAARQLVNHGHIVVNNKKVDISSYQCQSQDVISVTKNKTIRTL).

Belongs to the universal ribosomal protein uS4 family. As to quaternary structure, part of the 30S ribosomal subunit. Contacts protein S5. The interaction surface between S4 and S5 is involved in control of translational fidelity.

Its subcellular location is the plastid. It localises to the chloroplast. Functionally, one of the primary rRNA binding proteins, it binds directly to 16S rRNA where it nucleates assembly of the body of the 30S subunit. With S5 and S12 plays an important role in translational accuracy. In Pleurastrum terricola (Filamentous green alga), this protein is Small ribosomal subunit protein uS4c (rps4).